The following is a 93-amino-acid chain: Cell division protein FtsB (93 aa).

At 1-3 (MRL) the chain is on the cytoplasmic side. A helical transmembrane segment spans residues 4-21 (FILVLTLLFGWLQYTLWF). The Periplasmic segment spans residues 22–93 (GKNGVSDYYT…FYRIVGEENQ (72 aa)). Residues 42–75 (VNTKLQARNSEMYAEIDDLKQGLDAIEERARHEL) adopt a coiled-coil conformation.

It belongs to the FtsB family. As to quaternary structure, part of a complex composed of FtsB, FtsL and FtsQ.

Its subcellular location is the cell inner membrane. Functionally, essential cell division protein. May link together the upstream cell division proteins, which are predominantly cytoplasmic, with the downstream cell division proteins, which are predominantly periplasmic. The protein is Cell division protein FtsB of Vibrio vulnificus (strain YJ016).